The sequence spans 374 residues: Fibrous sheath-interacting protein 1 (374 aa).

3 disordered regions span residues 1–80 (MEVY…LEVL), 95–120 (EMTD…PEMR), and 225–244 (EVGQ…HSKS). 3 stretches are compositionally biased toward basic and acidic residues: residues 12–28 (PHSR…RDKS), 45–55 (DIIKGRLDEIS), and 65–77 (ENRR…HRSL). Residues 262–290 (SVFLTQQEKERIEDLLKDLEEELLEEPQL) are a coiled coil.

Belongs to the FSIP1 family.

This is Fibrous sheath-interacting protein 1 (fsip1) from Danio rerio (Zebrafish).